We begin with the raw amino-acid sequence, 222 residues long: Voltage-dependent calcium channel gamma-1 subunit (222 aa).

The Cytoplasmic portion of the chain corresponds to 1 to 10; the sequence is MSQTKMLKVR. The helical transmembrane segment at 11–29 threads the bilayer; it reads VTLFCILAGIVLAMTAVVT. Over 30 to 108 the chain is Extracellular; it reads DHWAVLSPHM…TQKEYSISAA (79 aa). N-linked (GlcNAc...) asparagine glycans are attached at residues N43 and N79. The cysteines at positions 57 and 80 are disulfide-linked. Residues 109–129 form a helical membrane-spanning segment; that stretch reads AIAIFSLGFIILGSLCVLLSL. The Cytoplasmic portion of the chain corresponds to 130-134; that stretch reads GKKRD. A helical membrane pass occupies residues 135-155; it reads YLLRPASMFYAFAGLCILVSV. Residues 156 to 179 lie on the Extracellular side of the membrane; it reads EVMRQSVKRMIDSEDTVWIEYYYS. A helical transmembrane segment spans residues 180–204; it reads WSFACACAAFILLFLGGLALLLFSL. Residues 205-222 lie on the Cytoplasmic side of the membrane; it reads PRMPRNPWESCMDAEPEH.

It belongs to the PMP-22/EMP/MP20 family. CACNG subfamily. In terms of assembly, component of a calcium channel complex consisting of a pore-forming alpha subunit (CACNA1S) and the ancillary subunits CACNB1 or CACNB2, CACNG1 and CACNA2D1. The channel complex contains alpha, beta, gamma and delta subunits in a 1:1:1:1 ratio, i.e. it contains either CACNB1 or CACNB2. Post-translationally, N-glycosylated. Skeletal muscle.

It is found in the cell membrane. The protein resides in the sarcolemma. Regulatory subunit of the voltage-gated calcium channel that gives rise to L-type calcium currents in skeletal muscle. Regulates channel inactivation kinetics. The sequence is that of Voltage-dependent calcium channel gamma-1 subunit (CACNG1) from Homo sapiens (Human).